We begin with the raw amino-acid sequence, 356 residues long: DNA polymerase IV (356 aa).

Residues 4 to 185 (IIHIDMDCYY…LALGKIPGVG (182 aa)) enclose the UmuC domain. Mg(2+) contacts are provided by aspartate 8 and aspartate 103. Glutamate 104 is a catalytic residue.

This sequence belongs to the DNA polymerase type-Y family. Monomer. Mg(2+) is required as a cofactor.

It localises to the cytoplasm. It catalyses the reaction DNA(n) + a 2'-deoxyribonucleoside 5'-triphosphate = DNA(n+1) + diphosphate. Functionally, poorly processive, error-prone DNA polymerase involved in untargeted mutagenesis. Copies undamaged DNA at stalled replication forks, which arise in vivo from mismatched or misaligned primer ends. These misaligned primers can be extended by PolIV. Exhibits no 3'-5' exonuclease (proofreading) activity. May be involved in translesional synthesis, in conjunction with the beta clamp from PolIII. This is DNA polymerase IV from Pseudoalteromonas atlantica (strain T6c / ATCC BAA-1087).